The sequence spans 668 residues: uncharacterized protein (668 aa).

The next 9 helical transmembrane spans lie at 182-202 (FAFA…GILG), 208-228 (PYSY…IQFW), 286-306 (VPLF…AFIV), 321-341 (IVSL…TFIY), 379-399 (ALFL…PHYI), 430-450 (IYFL…VPQL), 499-519 (FVLM…APIF), 557-577 (LSLL…FYSS), and 587-607 (VIAA…RMFI).

It is found in the membrane. This is an uncharacterized protein from Schizosaccharomyces pombe (strain 972 / ATCC 24843) (Fission yeast).